The following is a 114-amino-acid chain: MSPSQLIGFLLLWVPASRGEIVLTQSPDFQSVTPKEKVTITCRASQSIGSSLHWYQQKPDQSPKLLIKYASQSISGVPSRFSGSGSGTDFTLTINSLEAEDAAAYYCHQSSSLP.

An N-terminal signal peptide occupies residues 1–19 (MSPSQLIGFLLLWVPASRG). Residues 20–42 (EIVLTQSPDFQSVTPKEKVTITC) are framework-1. One can recognise an Ig-like domain in the interval 20–114 (EIVLTQSPDF…YYCHQSSSLP (95 aa)). A disulfide bridge links Cys-42 with Cys-107. The segment at 43–53 (RASQSIGSSLH) is complementarity-determining-1. The segment at 54–68 (WYQQKPDQSPKLLIK) is framework-2. The segment at 69–75 (YASQSIS) is complementarity-determining-2. The framework-3 stretch occupies residues 76–107 (GVPSRFSGSGSGTDFTLTINSLEAEDAAAYYC). The segment at 108–114 (HQSSSLP) is complementarity-determining-3.

As to quaternary structure, immunoglobulins are composed of two identical heavy chains and two identical light chains; disulfide-linked.

It is found in the secreted. The protein localises to the cell membrane. V region of the variable domain of immunoglobulin light chains that participates in the antigen recognition. Immunoglobulins, also known as antibodies, are membrane-bound or secreted glycoproteins produced by B lymphocytes. In the recognition phase of humoral immunity, the membrane-bound immunoglobulins serve as receptors which, upon binding of a specific antigen, trigger the clonal expansion and differentiation of B lymphocytes into immunoglobulins-secreting plasma cells. Secreted immunoglobulins mediate the effector phase of humoral immunity, which results in the elimination of bound antigens. The antigen binding site is formed by the variable domain of one heavy chain, together with that of its associated light chain. Thus, each immunoglobulin has two antigen binding sites with remarkable affinity for a particular antigen. The variable domains are assembled by a process called V-(D)-J rearrangement and can then be subjected to somatic hypermutations which, after exposure to antigen and selection, allow affinity maturation for a particular antigen. The sequence is that of Immunoglobulin kappa variable 6D-21 from Homo sapiens (Human).